Consider the following 188-residue polypeptide: Elongation factor P (188 aa).

It belongs to the elongation factor P family.

It is found in the cytoplasm. It participates in protein biosynthesis; polypeptide chain elongation. Its function is as follows. Involved in peptide bond synthesis. Stimulates efficient translation and peptide-bond synthesis on native or reconstituted 70S ribosomes in vitro. Probably functions indirectly by altering the affinity of the ribosome for aminoacyl-tRNA, thus increasing their reactivity as acceptors for peptidyl transferase. The sequence is that of Elongation factor P from Rhodopseudomonas palustris (strain HaA2).